Reading from the N-terminus, the 174-residue chain is Ubiquinone biosynthesis accessory factor UbiT (174 aa).

In terms of domain architecture, SCP2 spans leucine 45–aspartate 133.

The protein belongs to the UbiT family.

The protein operates within cofactor biosynthesis; ubiquinone biosynthesis. Its function is as follows. Required for O(2)-independent ubiquinone (coenzyme Q) biosynthesis. Likely functions as an accessory factor. The protein is Ubiquinone biosynthesis accessory factor UbiT of Escherichia coli O157:H7.